We begin with the raw amino-acid sequence, 1066 residues long: MLGDGNEGMATIPGFNQIQFEGFCRFIDQGLAEELYKFPKIEDTDQEIEFQLFVETYQLVEPLIKERDAVYELLTYSSELYVSAGLIWKTGRDMQEQTIFIGNIPLMNSLGTFIVNGVYRILINQILQSPGIYYRSELDHNGISVYTGTIISDWGGRSELEIDRKARIWARVSRKQKISILVLSSAMGSNLREILENVCYPEIFLSFLNDKERKKIGSKENAILEFYQQFACVGGDPVFSESLCKELQKKFFQQRCELGRIGRRNMNRRLNLDIPQNNPFLLPRDILAAADHLIGLKFGMGTLDDMNHLKNKRIRSVADLLQDQFGLALVRLENAVRGTICGAIRHKLIPTPQNLVTSTPLTTTYESFFGLHPLSQVLDGTNPLTQIVHGRKLSYLGPGGLTGRTANFRIRDIHPSHYGRICPIDTSEGINVGLIGSLSIHARIGHWGFLESPFYEISERRVLFLLPGRDEYYKVAAGNSLALNQDIQEKQVVPARYRQEFLTIAWEQVHLRSIFPFQYFSIGASLIPFIEHNDANRALMSSNMQRQAVPLSRSEKCIVGTGLEQQAALDSGALSIAEREGKVLYTDTDKILLSGNGGTLSIPLVMYQRSNKNTCMHQKPRVQRGKCIKKGQILADAAATVGGELSLGKNVLVAYMPWEGYNFEDAVLISERLVYEDIYTSFHIRKYEIQTHVTSQGPERVTNEIPHLEAHLLRNLDKSGIVMLGSWVETGDILVGKLTPQMVKESSYAPEDRLLRAILGIQVSTSKETCLKLPIGGRGRVIDVRWIQKKGGSSYNPEMIRVYISQKREIKVGDKVAGRHGNKGIISKILTRQDMPYLQDGRPVDMVFNPLGVPSRMNVGQIFECSLGLAGSLLDRHYRIAPFDERYEQEASRKLVFSELYQASKQTANPWVFEAEYPGKSRIFDGRTGNPFEQPVLIGKPYILKLIHQVDDKIHGRSSGHYALVTQQPLRGRAKQGGQRVGEMEVWALEGFGVAHILQEMLTYKSDHIRARQEVLGTTIVGGTIPNPEDAPESFRLLVRELRSLALELKHFLISEKNFRIHRKEA.

This sequence belongs to the RNA polymerase beta chain family. In plastids the minimal PEP RNA polymerase catalytic core is composed of four subunits: alpha, beta, beta', and beta''. When a (nuclear-encoded) sigma factor is associated with the core the holoenzyme is formed, which can initiate transcription.

It is found in the plastid. The protein resides in the chloroplast. It carries out the reaction RNA(n) + a ribonucleoside 5'-triphosphate = RNA(n+1) + diphosphate. Its function is as follows. DNA-dependent RNA polymerase catalyzes the transcription of DNA into RNA using the four ribonucleoside triphosphates as substrates. The polypeptide is DNA-directed RNA polymerase subunit beta (Coffea arabica (Arabian coffee)).